A 234-amino-acid chain; its full sequence is 1-(5-phosphoribosyl)-5-[(5-phosphoribosylamino)methylideneamino] imidazole-4-carboxamide isomerase (234 aa).

The active-site Proton acceptor is aspartate 9. Aspartate 131 acts as the Proton donor in catalysis.

This sequence belongs to the HisA/HisF family.

It localises to the cytoplasm. The catalysed reaction is 1-(5-phospho-beta-D-ribosyl)-5-[(5-phospho-beta-D-ribosylamino)methylideneamino]imidazole-4-carboxamide = 5-[(5-phospho-1-deoxy-D-ribulos-1-ylimino)methylamino]-1-(5-phospho-beta-D-ribosyl)imidazole-4-carboxamide. It functions in the pathway amino-acid biosynthesis; L-histidine biosynthesis; L-histidine from 5-phospho-alpha-D-ribose 1-diphosphate: step 4/9. The sequence is that of 1-(5-phosphoribosyl)-5-[(5-phosphoribosylamino)methylideneamino] imidazole-4-carboxamide isomerase from Staphylococcus carnosus (strain TM300).